The following is a 216-amino-acid chain: Cytochrome c biogenesis ATP-binding export protein CcmA (216 aa).

An ABC transporter domain is found at 11-216 (LSANELTCIR…RKITLDYRFV (206 aa)). 43–50 (GPNGAGKT) is a binding site for ATP.

It belongs to the ABC transporter superfamily. CcmA exporter (TC 3.A.1.107) family. The complex is composed of two ATP-binding proteins (CcmA) and two transmembrane proteins (CcmB).

The protein resides in the cell inner membrane. It carries out the reaction heme b(in) + ATP + H2O = heme b(out) + ADP + phosphate + H(+). Its function is as follows. Part of the ABC transporter complex CcmAB involved in the biogenesis of c-type cytochromes; once thought to export heme, this seems not to be the case, but its exact role is uncertain. Responsible for energy coupling to the transport system. This Shewanella frigidimarina (strain NCIMB 400) protein is Cytochrome c biogenesis ATP-binding export protein CcmA.